The following is a 1227-amino-acid chain: ATP-dependent helicase/nuclease subunit A (1227 aa).

A UvrD-like helicase ATP-binding domain is found at 37 to 503; sequence QKRTAEQIEA…ILLKENFRSQ (467 aa). Residue 58–65 coordinates ATP; the sequence is ASAGSGKT. In terms of domain architecture, UvrD-like helicase C-terminal spans 532–816; that stretch reads SLVAGSPGQK…QLMTIHKSKG (285 aa).

This sequence belongs to the helicase family. AddA subfamily. In terms of assembly, heterodimer of AddA and AddB/RexB. Mg(2+) is required as a cofactor.

It carries out the reaction Couples ATP hydrolysis with the unwinding of duplex DNA by translocating in the 3'-5' direction.. The catalysed reaction is ATP + H2O = ADP + phosphate + H(+). Functionally, the heterodimer acts as both an ATP-dependent DNA helicase and an ATP-dependent, dual-direction single-stranded exonuclease. Recognizes the chi site generating a DNA molecule suitable for the initiation of homologous recombination. The AddA nuclease domain is required for chi fragment generation; this subunit has the helicase and 3' -&gt; 5' nuclease activities. In Streptococcus suis (strain 98HAH33), this protein is ATP-dependent helicase/nuclease subunit A.